The following is a 253-amino-acid chain: Phycoerythrobilin:ferredoxin oxidoreductase (253 aa).

This sequence belongs to the HY2 family.

It carries out the reaction (3Z)-phycoerythrobilin + oxidized 2[4Fe-4S]-[ferredoxin] = 15,16-dihydrobiliverdin + reduced 2[4Fe-4S]-[ferredoxin] + 2 H(+). Functionally, catalyzes the two-electron reduction of the C2 and C3(1) diene system of 15,16-dihydrobiliverdin. The chain is Phycoerythrobilin:ferredoxin oxidoreductase from Prochlorococcus marinus (strain MIT 9301).